Reading from the N-terminus, the 191-residue chain is MKKQLLAALIGGFLLAPMAASAADYVIDREGAHASITFKVSHLGYSYVVGRFNDFSGDFSYDAKNPTAAKVNVKVNTLSVDSNHAERDKHIRSGDFLNTAKFAEATFVSTSVEDKGNGDMVITGNFTLNGVTKPLAIQAHAVGEGQDPWGGYRAGFTGTTTFAMKDYGIKMDLGPASANVELDLVVEGVRK.

The first 22 residues, 1–22 (MKKQLLAALIGGFLLAPMAASA), serve as a signal peptide directing secretion.

It belongs to the UPF0312 family. Type 1 subfamily.

The protein resides in the periplasm. In Shewanella sp. (strain MR-7), this protein is UPF0312 protein Shewmr7_1249.